We begin with the raw amino-acid sequence, 230 residues long: Broad specificity amino-acid racemase YgeA (230 aa).

Residues Met10, Gln52, and 83–85 (TNT) contribute to the substrate site. Thr83 acts as the Proton donor in catalysis. Residue Cys197 is the Proton acceptor of the active site. 198–199 (TE) lines the substrate pocket.

The protein belongs to the aspartate/glutamate racemases family.

It carries out the reaction an L-alpha-amino acid = a D-alpha-amino acid. The catalysed reaction is L-homoserine = D-homoserine. Amino-acid racemase able to utilize a broad range of substrates. Highest activity is observed with L-homoserine and D-homoserine. Has tenfold lower activity against L-methionine, L-leucine, L-valine and L-histidine. Has low activity with L-norvaline, L-asparagine, D-methionine, L-aminobutyric acid, L-isoleucine, L-serine, L-norleucine, L-alanine, L-glutamine, LL-diaminopimelic acid and L-phenylalanine. Has no activity against ten L-amino acids (Thr, Glu, Asp, Arg, Lys, Tyr, Trp, Orn, Cit and Aad). D-amino acids might be used as components of peptidoglycan and/or be involved in peptidoglycan metabolism and remodeling. The protein is Broad specificity amino-acid racemase YgeA (ygeA) of Escherichia coli (strain K12).